The following is a 602-amino-acid chain: Glutamate-rich protein 6 (602 aa).

The tract at residues Leu22 to Ser67 is disordered. Low complexity predominate over residues Arg25–Ser36.

It belongs to the ERICH6 family.

It localises to the nucleus. The chain is Glutamate-rich protein 6 (Erich6) from Rattus norvegicus (Rat).